A 624-amino-acid chain; its full sequence is Polycystin-2-like protein 2 (624 aa).

The Cytoplasmic portion of the chain corresponds to 1 to 31 (MAEASRWHRGGASKHKLHYRKEVEITTTLQE). A helical membrane pass occupies residues 32–52 (LLLYFIFLINLCILTFGMVNP). Topologically, residues 53-276 (HMYYLNKVMS…YSVKLLRYVS (224 aa)) are extracellular. Asn115 and Asn138 each carry an N-linked (GlcNAc...) asparagine glycan. Residues 277-297 (YYDYFIASCEITFCIFLFVFT) traverse the membrane as a helical segment. Residues 298-314 (TQEVKKIKEFKSAYFKS) lie on the Cytoplasmic side of the membrane. Residues 315–335 (IWNWLELLLLLLCFVAVSFNT) traverse the membrane as a helical segment. Over 336 to 360 (YYNVQIFLLLGQLLKSTEKYSDFYF) the chain is Extracellular. A helical membrane pass occupies residues 361 to 381 (LACWHIYYNNIIAITIFFAWI). Over 382–406 (KIFKFISFNKTMSQLSSTLSRCVKD) the chain is Cytoplasmic. A helical transmembrane segment spans residues 407–427 (IVGFAIMFFIIFFAYAQLGFL). At 428 to 469 (VFGSQVDDFSTFQNSIFAQFRIVLGDFNFAGIQQANPILGPI) the chain is on the extracellular side. A helical membrane pass occupies residues 470 to 490 (YFITFIFFVFFVLLNMFLAII). Residues 491-624 (NDTYSEVKAD…NQVVRKVSAL (134 aa)) are Cytoplasmic-facing. The stretch at 556-576 (ENEIQNAEQMKKWKERLEKKY) forms a coiled coil.

The protein belongs to the polycystin family. Interacts with TRPC1 and TRPC5. In terms of tissue distribution, expressed only in testis. Expressed also in brain and kidney. As to expression, expressed only in transformed lymphoblasts.

The protein localises to the membrane. Exhibits a lower single conductance but no spontaneous channel activity. May function as a regulator of calcium channels or a channel component involving Ca2(+) homeostasis. The protein is Polycystin-2-like protein 2 of Homo sapiens (Human).